The chain runs to 130 residues: MVMTDPIADMLTRIRNANQMSHLKVLVPASKLKLEILAVLKKEGFIKDFYLPQSSREIIISLKYSPNKERVIKGLKRVSKPGLRVYASAEQIPKVLNGLGVALVSTSKGILTDAQARLSQVGGEVLAYIW.

The protein belongs to the universal ribosomal protein uS8 family. As to quaternary structure, part of the 30S ribosomal subunit. Contacts proteins S5 and S12.

In terms of biological role, one of the primary rRNA binding proteins, it binds directly to 16S rRNA central domain where it helps coordinate assembly of the platform of the 30S subunit. This chain is Small ribosomal subunit protein uS8, found in Aster yellows witches'-broom phytoplasma (strain AYWB).